Consider the following 249-residue polypeptide: Exosome complex component Rrp41 (249 aa).

Belongs to the RNase PH family. Rrp41 subfamily. Component of the archaeal exosome complex. Forms a hexameric ring-like arrangement composed of 3 Rrp41-Rrp42 heterodimers. The hexameric ring associates with a trimer of Rrp4 and/or Csl4 subunits.

It localises to the cytoplasm. In terms of biological role, catalytic component of the exosome, which is a complex involved in RNA degradation. Has 3'-&gt;5' exoribonuclease activity. Can also synthesize heteromeric RNA-tails. The chain is Exosome complex component Rrp41 from Thermococcus gammatolerans (strain DSM 15229 / JCM 11827 / EJ3).